A 190-amino-acid polypeptide reads, in one-letter code: NHNPECIVNEPLGTDIVSPPVCGNELLEVGEECDCGTPENCQNECCDAATCKLKSGSQCGHGDCCEQCKFSKSGTECRESMSECDPAEHCSGQCSECPADVFHKNGQPCLDNYGYCYNGNCPIMYHQCYALWGADVYEAEDSCFESNKKGNYYYGYCRKENGKKIPCAPEDVKCGRLYCKDNSPGQNGPC.

The Peptidase M12B domain maps to 1 to 11 (NHNPECIVNEP). The 87-residue stretch at 19 to 105 (PPVCGNELLE…ECPADVFHKN (87 aa)) folds into the Disintegrin domain. Residues valine 21, asparagine 24, leucine 26, glutamate 28, glutamate 31, and aspartate 34 each contribute to the Ca(2+) site. Disulfide bonds link cysteine 33/cysteine 51, cysteine 35/cysteine 46, cysteine 45/cysteine 68, cysteine 59/cysteine 65, cysteine 64/cysteine 90, and cysteine 77/cysteine 97. A D/ECD-tripeptide motif is present at residues 83–85 (ECD). Residues aspartate 85, proline 86, glutamate 88, aspartate 100, and valine 101 each coordinate Ca(2+). Positions 104 to 190 (KNGQPCLDNY…DNSPGQNGPC (87 aa)) are excised as a propeptide.

It belongs to the venom metalloproteinase (M12B) family. P-III subfamily. As to quaternary structure, monomer. The cofactor is Zn(2+). In terms of tissue distribution, expressed by the venom gland.

It is found in the secreted. Its function is as follows. Impairs hemostasis in the envenomed animal. Functionally, inhibits platelet aggregation induced by ADP, thrombin, platelet-activating factor and collagen. Acts by inhibiting fibrinogen interaction with platelet receptors GPIIb/GPIIIa (ITGA2B/ITGB3). This is Zinc metalloproteinase/disintegrin from Gloydius brevicauda (Korean slamosa snake).